The chain runs to 264 residues: Adenosylcobinamide-GDP ribazoletransferase (264 aa).

6 helical membrane passes run 39–59 (IAYAVPLAGAAIGLAGAAILI), 63–83 (ALGLPNLVAAILAVLTCVLLT), 121–141 (ACALVFSLLLRVALLDGLLAL), 148–168 (LALIAAASLSRAAGMLLLEFL), 201–221 (LLIVPSTGVGATLMAIGLSVL), and 241–261 (VAGAVQQLCEIAFLMGVLIYA).

Belongs to the CobS family. Mg(2+) serves as cofactor.

It localises to the cell inner membrane. The catalysed reaction is alpha-ribazole + adenosylcob(III)inamide-GDP = adenosylcob(III)alamin + GMP + H(+). It carries out the reaction alpha-ribazole 5'-phosphate + adenosylcob(III)inamide-GDP = adenosylcob(III)alamin 5'-phosphate + GMP + H(+). Its pathway is cofactor biosynthesis; adenosylcobalamin biosynthesis; adenosylcobalamin from cob(II)yrinate a,c-diamide: step 7/7. In terms of biological role, joins adenosylcobinamide-GDP and alpha-ribazole to generate adenosylcobalamin (Ado-cobalamin). Also synthesizes adenosylcobalamin 5'-phosphate from adenosylcobinamide-GDP and alpha-ribazole 5'-phosphate. The sequence is that of Adenosylcobinamide-GDP ribazoletransferase from Azorhizobium caulinodans (strain ATCC 43989 / DSM 5975 / JCM 20966 / LMG 6465 / NBRC 14845 / NCIMB 13405 / ORS 571).